Here is a 206-residue protein sequence, read N- to C-terminus: MSKTTIIGIAGGSGSGKTSVTSKILKNLEGYSVALIEQDYYYKNQDHLTFEERLKTNYDHPFAFDNELLIQNLKDLRNGKTVEVPTYDYSNHTRSEKTITFEPKDVIIVEGIFALENSNLRDLMDVKIYVDTDADLRILRRIVRDIEERGRTMESVIDQYLTVVRPMHNQFIEPTKKYADIIIPEGGSNSVAIDIMTTKIQSLIQV.

11–18 (GGSGSGKT) contributes to the ATP binding site.

The protein belongs to the uridine kinase family.

It is found in the cytoplasm. The enzyme catalyses uridine + ATP = UMP + ADP + H(+). It catalyses the reaction cytidine + ATP = CMP + ADP + H(+). It participates in pyrimidine metabolism; CTP biosynthesis via salvage pathway; CTP from cytidine: step 1/3. It functions in the pathway pyrimidine metabolism; UMP biosynthesis via salvage pathway; UMP from uridine: step 1/1. The protein is Uridine kinase of Macrococcus caseolyticus (strain JCSC5402) (Macrococcoides caseolyticum).